Consider the following 487-residue polypeptide: Inosine-5'-monophosphate dehydrogenase (487 aa).

CBS domains lie at 93–152 and 153–214; these read VVTE…VTAV and MTPK…CKDE. Residues D248, 248 to 250, and 298 to 300 each bind NAD(+); these read DSS and GIG. Positions 300 and 302 each coordinate K(+). S303 is an IMP binding site. C305 contributes to the K(+) binding site. C305 acts as the Thioimidate intermediate in catalysis. Residues 338 to 340, 361 to 362, and 385 to 389 each bind IMP; these read DGG, GS, and YRGMG. The active-site Proton acceptor is the R401. E415 contributes to the IMP binding site. E469, S470, and H471 together coordinate K(+).

This sequence belongs to the IMPDH/GMPR family. Homotetramer. K(+) serves as cofactor.

The catalysed reaction is IMP + NAD(+) + H2O = XMP + NADH + H(+). It functions in the pathway purine metabolism; XMP biosynthesis via de novo pathway; XMP from IMP: step 1/1. Mycophenolic acid (MPA) is a non-competitive inhibitor that prevents formation of the closed enzyme conformation by binding to the same site as the amobile flap. In contrast, mizoribine monophosphate (MZP) is a competitive inhibitor that induces the closed conformation. MPA is a potent inhibitor of mammalian IMPDHs but a poor inhibitor of the bacterial enzymes. MZP is a more potent inhibitor of bacterial IMPDH. Functionally, catalyzes the conversion of inosine 5'-phosphate (IMP) to xanthosine 5'-phosphate (XMP), the first committed and rate-limiting step in the de novo synthesis of guanine nucleotides, and therefore plays an important role in the regulation of cell growth. The polypeptide is Inosine-5'-monophosphate dehydrogenase (Yersinia pestis).